The primary structure comprises 451 residues: Charged multivesicular body protein 7 (451 aa).

The tract at residues 1-22 is disordered; the sequence is MWSPEREAQAPTGGDPAGLLPP. A Phosphoserine modification is found at serine 232. Residues 248–312 adopt a coiled-coil conformation; it reads EQLLSRKVES…DTVQGILDRI (65 aa). Threonine 409 carries the phosphothreonine modification. 3 positions are modified to phosphoserine: serine 411, serine 432, and serine 442. The interval 431–451 is disordered; the sequence is LSEGGLIPSSKSPKRQLEPTL.

The protein belongs to the SNF7 family. Interacts with CHMP4B, but not with VPS25. Interacts with LEMD2 (via C-terminus).

Its subcellular location is the cytoplasm. The protein resides in the nucleus envelope. In terms of biological role, ESCRT-III-like protein required to recruit the ESCRT-III complex to the nuclear envelope (NE) during late anaphase. Together with SPAST, the ESCRT-III complex promotes NE sealing and mitotic spindle disassembly during late anaphase. Recruited to the reforming NE during anaphase by LEMD2. Plays a role in the endosomal sorting pathway. This chain is Charged multivesicular body protein 7 (Chmp7), found in Mus musculus (Mouse).